Here is a 184-residue protein sequence, read N- to C-terminus: NADH-quinone oxidoreductase subunit B (184 aa).

Positions 37, 38, 103, and 132 each coordinate [4Fe-4S] cluster.

Belongs to the complex I 20 kDa subunit family. NDH-1 is composed of 14 different subunits. Subunits NuoB, C, D, E, F, and G constitute the peripheral sector of the complex. [4Fe-4S] cluster serves as cofactor.

It is found in the cell membrane. The enzyme catalyses a quinone + NADH + 5 H(+)(in) = a quinol + NAD(+) + 4 H(+)(out). NDH-1 shuttles electrons from NADH, via FMN and iron-sulfur (Fe-S) centers, to quinones in the respiratory chain. The immediate electron acceptor for the enzyme in this species is believed to be a menaquinone. Couples the redox reaction to proton translocation (for every two electrons transferred, four hydrogen ions are translocated across the cytoplasmic membrane), and thus conserves the redox energy in a proton gradient. The sequence is that of NADH-quinone oxidoreductase subunit B from Mycobacteroides abscessus (strain ATCC 19977 / DSM 44196 / CCUG 20993 / CIP 104536 / JCM 13569 / NCTC 13031 / TMC 1543 / L948) (Mycobacterium abscessus).